A 209-amino-acid chain; its full sequence is MGQKVHPRGFRLGLSADWQAKWFNEKNYKEWLLEDEEIRKFIKNRYYHAGISEIYVERPDAERINITVKTARPGIIIGRKGAEITSLREELERKFNRRVVINIEEIKTPELDAQLVAESIASRIEKRASYKVAMKRAIMNAMRKGAQGIKVMVAGRLGGAEIARREWYLRGRLPLQKLKAIIDYGTATAWTKYGTIGIKVWIYKGDADI.

The KH type-2 domain maps to 38 to 107 (IRKFIKNRYY…RVVINIEEIK (70 aa)).

The protein belongs to the universal ribosomal protein uS3 family. In terms of assembly, part of the 30S ribosomal subunit. Forms a tight complex with proteins S10 and S14.

Functionally, binds the lower part of the 30S subunit head. Binds mRNA in the 70S ribosome, positioning it for translation. The sequence is that of Small ribosomal subunit protein uS3 from Thermotoga petrophila (strain ATCC BAA-488 / DSM 13995 / JCM 10881 / RKU-1).